A 244-amino-acid polypeptide reads, in one-letter code: 5-oxoprolinase subunit A (244 aa).

Belongs to the LamB/PxpA family. In terms of assembly, forms a complex composed of PxpA, PxpB and PxpC.

It carries out the reaction 5-oxo-L-proline + ATP + 2 H2O = L-glutamate + ADP + phosphate + H(+). Functionally, catalyzes the cleavage of 5-oxoproline to form L-glutamate coupled to the hydrolysis of ATP to ADP and inorganic phosphate. The protein is 5-oxoprolinase subunit A of Escherichia fergusonii (strain ATCC 35469 / DSM 13698 / CCUG 18766 / IAM 14443 / JCM 21226 / LMG 7866 / NBRC 102419 / NCTC 12128 / CDC 0568-73).